Reading from the N-terminus, the 356-residue chain is Glycoprotein 42 (356 aa).

A signal peptide spans 1 to 32; the sequence is MEGPAFSKPLKDKINPWGPLIVLGILIRAGVS. Residues 33-331 are Virion surface-facing; sequence VQRDSPHQVF…VLGTNSNHTT (299 aa). Residues N43 and N58 are each glycosylated (N-linked (GlcNAc...) asparagine; by host). The tract at residues 247–279 is disordered; the sequence is RPAQIMLPRPPQPPPPGTASIVPETAPPSQQPG. The span at 254–263 shows a compositional bias: pro residues; that stretch reads PRPPQPPPPG. N296 carries an N-linked (GlcNAc...) asparagine; by host glycan. Residues 306-309 carry the CXXC motif; it reads CWLC. An N-linked (GlcNAc...) asparagine; by host glycan is attached at N328. Residues 332–352 form a helical membrane-spanning segment; that stretch reads LISTIMGLLIILLLLLILLLW. The Intravirion segment spans residues 353-356; that stretch reads TLHS.

Homooligomer. Forms heterooligomers with mouse EPOR, probably via their respective transmembrane domains. BB6 deletion mutant does not interact with mouse MST1R isoform sf-Stk.

It is found in the host endoplasmic reticulum membrane. Its subcellular location is the host cell membrane. The protein resides in the virion membrane. Its function is as follows. This envelope-like membrane glycoprotein is responsible for ligand-independent activation of the erythropoietin receptor EPOR leading to the abnormally rapid proliferation of erythroid precursor cells. In the first stage of Friend disease, constitutive activation of the EPOR by gp42 causes uncontrolled, polyclonal proliferation of infected erythroblasts, leading to polycythemia (massive increase in the number of mature red cells). Host susceptibility to SSFV-induced erythroblastosis usually depends on the expression of the truncated isoform of MST1R receptor tyrosine kinase (MST1R isoform sf-Stk), but the deletion mutant BB6 apparently can overcome its absence. The sequence is that of Glycoprotein 42 (env) from Mus musculus (Mouse).